We begin with the raw amino-acid sequence, 367 residues long: Peptide chain release factor 1 (367 aa).

Gln-243 bears the N5-methylglutamine mark.

It belongs to the prokaryotic/mitochondrial release factor family. Methylated by PrmC. Methylation increases the termination efficiency of RF1.

Its subcellular location is the cytoplasm. Its function is as follows. Peptide chain release factor 1 directs the termination of translation in response to the peptide chain termination codons UAG and UAA. The sequence is that of Peptide chain release factor 1 from Acidovorax ebreus (strain TPSY) (Diaphorobacter sp. (strain TPSY)).